A 103-amino-acid chain; its full sequence is Histone H4 type VIII (103 aa).

Residues 1 to 14 (MSGRGKGGKGLGKG) show a composition bias toward gly residues. Positions 1–20 (MSGRGKGGKGLGKGGAKRHR) are disordered. Ser-2 carries the N-acetylserine modification. Ser-2 carries the phosphoserine modification. An Asymmetric dimethylarginine; by PRMT1; alternate modification is found at Arg-4. Arg-4 is modified (citrulline; alternate). Arg-4 bears the Omega-N-methylarginine; by PRMT1; alternate mark. Residue Arg-4 is modified to Symmetric dimethylarginine; by PRMT5 and PRMT7; alternate. Residues Lys-6, Lys-9, Lys-13, and Lys-17 each carry the N6-(2-hydroxyisobutyryl)lysine; alternate modification. Lys-6 carries the post-translational modification N6-acetyl-N6-methyllysine; alternate. N6-acetyllysine occurs at positions 6, 9, 13, and 17. N6-butyryllysine; alternate occurs at positions 6, 9, 13, and 17. Residue Lys-6 is modified to N6-glutaryllysine; alternate. N6-lactoyllysine; alternate occurs at positions 6, 9, 13, and 17. Lys-9 carries the N6-propionyllysine; alternate modification. At Lys-13 the chain carries N6-acetyl-N6-methyllysine; alternate. Lys-13 is modified (N6-glutaryllysine; alternate). The residue at position 13 (Lys-13) is an N6-methyllysine; alternate. N6-propionyllysine; alternate is present on Lys-17. Lys-21 is subject to N6-methyllysine; alternate. Position 21 is an N6,N6,N6-trimethyllysine; alternate (Lys-21). N6,N6-dimethyllysine; alternate is present on Lys-21. N6-(2-hydroxyisobutyryl)lysine; alternate occurs at positions 32 and 45. Position 32 is an N6-acetyllysine (Lys-32). N6-butyryllysine; alternate is present on residues Lys-32 and Lys-45. Position 32 is an N6-glutaryllysine; alternate (Lys-32). Position 32 is an N6-lactoyllysine; alternate (Lys-32). N6-propionyllysine; alternate is present on residues Lys-32 and Lys-45. Lys-32 is modified (N6-succinyllysine; alternate). Lys-32 is covalently cross-linked (Glycyl lysine isopeptide (Lys-Gly) (interchain with G-Cter in UFM1); alternate). A Phosphoserine modification is found at Ser-48. Tyr-52 is modified (phosphotyrosine). N6-acetyllysine is present on Lys-60. N6-glutaryllysine; alternate occurs at positions 60, 78, and 80. N6-(2-hydroxyisobutyryl)lysine is present on Lys-60. N6-(2-hydroxyisobutyryl)lysine; alternate occurs at positions 78 and 80. An N6-butyryllysine; alternate mark is found at Lys-78 and Lys-80. Lys-78 is modified (N6-lactoyllysine; alternate). Residues Lys-78 and Lys-80 each carry the N6-propionyllysine; alternate modification. Lys-78 is modified (N6-succinyllysine). Position 80 is an N6-acetyllysine (Lys-80). Tyr-89 is modified (phosphotyrosine). Lys-92 carries the N6-(2-hydroxyisobutyryl)lysine; alternate modification. Position 92 is an N6-butyryllysine; alternate (Lys-92). An N6-glutaryllysine; alternate modification is found at Lys-92. Residue Lys-92 is modified to N6-lactoyllysine; alternate. At Lys-92 the chain carries N6-propionyllysine; alternate. The residue at position 92 (Lys-92) is an N6-succinyllysine; alternate. N6-acetyllysine; alternate is present on Lys-92. Lys-92 is covalently cross-linked (Glycyl lysine isopeptide (Lys-Gly) (interchain with G-Cter in ubiquitin); alternate).

This sequence belongs to the histone H4 family. In terms of assembly, the nucleosome is a histone octamer containing two molecules each of H2A, H2B, H3 and H4 assembled in one H3-H4 heterotetramer and two H2A-H2B heterodimers. The octamer wraps approximately 147 bp of DNA. Post-translationally, acetylation at Lys-6 (H4K5ac), Lys-9 (H4K8ac), Lys-13 (H4K12ac) and Lys-17 (H4K16ac) occurs in coding regions of the genome but not in heterochromatin. Citrullination at Arg-4 (H4R3ci) by PADI4 impairs methylation. In terms of processing, monomethylation and asymmetric dimethylation at Arg-4 (H4R3me1 and H4R3me2a, respectively) by PRMT1 favors acetylation at Lys-9 (H4K8ac) and Lys-13 (H4K12ac). Demethylation is performed by JMJD6. Symmetric dimethylation on Arg-4 (H4R3me2s) by the PRDM1/PRMT5 complex may play a crucial role in the germ-cell lineage. Post-translationally, monomethylated, dimethylated or trimethylated at Lys-21 (H4K20me1, H4K20me2, H4K20me3). Monomethylation is performed by KMT5A/SET8. Trimethylation is performed by KMT5B and KMT5C and induces gene silencing. Monomethylated at Lys-13 (H4K12me1) by N6AMT1; H4K12me1 modification is present at the promoters of numerous genes encoding cell cycle regulators. Acetyl-methylated at Lys-6 and Lys-13 (H4K5acme and H4K12acme, respectively), acetyl-methylation is an epigenetic mark of active chromatin associated with increased transcriptional initiation. Acetyl-methylation is formed by acetylation by EP300/p300 of lysine residues that are already monomethylated on the same side chain. H4K5acme and H4K12acme marks specifically bind BRD2. In terms of processing, ubiquitinated by the CUL4-DDB-RBX1 complex in response to ultraviolet irradiation. This may weaken the interaction between histones and DNA and facilitate DNA accessibility to repair proteins. Monoubiquitinated at Lys-92 of histone H4 (H4K91ub1) in response to DNA damage. The exact role of H4K91ub1 in DNA damage response is still unclear but it may function as a licensing signal for additional histone H4 post-translational modifications such as H4 Lys-21 methylation (H4K20me). Post-translationally, sumoylated, which is associated with transcriptional repression. Butyrylation of histones marks active promoters and competes with histone acetylation. In terms of processing, glutarylation at Lys-92 (H4K91glu) destabilizes nucleosomes by promoting dissociation of the H2A-H2B dimers from nucleosomes. Post-translationally, ufmylated; monofmylated by UFL1 at Lys-32 (H4K31Ufm1) in response to DNA damage. Lactylated in macrophages by EP300/P300 by using lactoyl-CoA directly derived from endogenous or exogenous lactate, leading to stimulates gene transcription. Delactylated by SIRT3 at Lys-17 (H4K16la).

It is found in the nucleus. The protein resides in the chromosome. Its function is as follows. Core component of nucleosome. Nucleosomes wrap and compact DNA into chromatin, limiting DNA accessibility to the cellular machineries which require DNA as a template. Histones thereby play a central role in transcription regulation, DNA repair, DNA replication and chromosomal stability. DNA accessibility is regulated via a complex set of post-translational modifications of histones, also called histone code, and nucleosome remodeling. In Gallus gallus (Chicken), this protein is Histone H4 type VIII (H4-VIII).